The sequence spans 195 residues: MRVLYITANPKLIHHSVSLSLGELALQYYRELNPSHITDRLDLTTEEYPHLNSDTLSNFMNPHSNLATQSKIFKDYDKYIIVAPMWNLTVPSALKAYLDTVIIPNVLFRYTEQGTCEGLCGGKMIYIGARGGDYSHPPQSEYAFDDKYMEGIAKMIGLESYQSYVANAVGGYRRRSVAQWVEHAKYDIEQMVTSF.

FMN contacts are provided by residues 16 to 18 (SVS) and 85 to 88 (MWNL).

It belongs to the azoreductase type 1 family. In terms of assembly, homodimer. Requires FMN as cofactor.

It catalyses the reaction 2 a quinone + NADH + H(+) = 2 a 1,4-benzosemiquinone + NAD(+). The catalysed reaction is N,N-dimethyl-1,4-phenylenediamine + anthranilate + 2 NAD(+) = 2-(4-dimethylaminophenyl)diazenylbenzoate + 2 NADH + 2 H(+). Quinone reductase that provides resistance to thiol-specific stress caused by electrophilic quinones. In terms of biological role, also exhibits azoreductase activity. Catalyzes the reductive cleavage of the azo bond in aromatic azo compounds to the corresponding amines. The protein is FMN-dependent NADH:quinone oxidoreductase 2 of Photobacterium profundum (strain SS9).